The chain runs to 405 residues: S-adenosylmethionine synthase (405 aa).

139–144 (GKGSAD) serves as a coordination point for ATP.

This sequence belongs to the AdoMet synthase 2 family. Mg(2+) is required as a cofactor.

It catalyses the reaction L-methionine + ATP + H2O = S-adenosyl-L-methionine + phosphate + diphosphate. The protein operates within amino-acid biosynthesis; S-adenosyl-L-methionine biosynthesis; S-adenosyl-L-methionine from L-methionine: step 1/1. Catalyzes the formation of S-adenosylmethionine from methionine and ATP. This Sulfurisphaera tokodaii (strain DSM 16993 / JCM 10545 / NBRC 100140 / 7) (Sulfolobus tokodaii) protein is S-adenosylmethionine synthase.